Here is a 1033-residue protein sequence, read N- to C-terminus: Tyrosine-protein kinase-like otk (1033 aa).

A signal peptide spans 1 to 22 (MTARMISIYGLVLASMMASVWA). At 23-581 (SSSRFQRLPQ…GGDGFLVTRA (559 aa)) the chain is on the extracellular side. 5 Ig-like C2-type domains span residues 25–108 (SRFQ…REAS), 109–199 (PPAK…RVMS), 251–365 (PEDL…LPIS), 368–463 (PGVL…VAIN), and 468–558 (PKFS…VQLV). An N-linked (GlcNAc...) asparagine glycan is attached at Asn-39. Disulfide bonds link Cys-46–Cys-95, Cys-137–Cys-188, Cys-276–Cys-354, and Cys-399–Cys-447. N-linked (GlcNAc...) asparagine glycosylation is found at Asn-336, Asn-417, Asn-429, Asn-444, Asn-457, Asn-512, and Asn-524. A disulfide bond links Cys-490 and Cys-542. A helical membrane pass occupies residues 582-602 (VLITMTVALAYIVLVVGLMLW). Residues 603 to 1033 (CRYRRQARKA…LSKAMQSVEK (431 aa)) lie on the Cytoplasmic side of the membrane. 2 disordered regions span residues 617 to 679 (LSTK…KKSA) and 718 to 760 (SPTD…KTSM). Residues 655–673 (KSSGDAQKSDDTACSQQSR) show a composition bias toward polar residues. Phosphoserine is present on Ser-678. Positions 692–1028 (LSELIQIGRG…QLGAALSKAM (337 aa)) constitute a Protein kinase; inactive domain. Positions 720–731 (TDKDADTEKQHS) are enriched in basic and acidic residues.

It belongs to the protein kinase superfamily. Tyr protein kinase family. Insulin receptor subfamily. As to quaternary structure, interacts with plexA; component of a receptor complex that mediates the repulsive signaling in response to Semaphorin ligands.

The protein localises to the cell membrane. Its function is as follows. Acts as a calcium-dependent, homophilic cell adhesion molecule that regulates neural recognition during the development of the nervous system. Component of the repulsive Plexin signaling response to regulate motor axon guidance at the embryonic stage. Also component of a receptor complex that is required in the adult visual system to innervate the lamina layer; specific targeting of R1-R6 axons. The polypeptide is Tyrosine-protein kinase-like otk (Drosophila erecta (Fruit fly)).